The chain runs to 200 residues: dTDP-4-dehydrorhamnose 3,5-epimerase (200 aa).

Substrate contacts are provided by residues R21, E26, 45-47 (QVN), and R57. H60 serves as the catalytic Proton acceptor. Substrate-binding residues include K70 and H116. Y129 functions as the Proton donor in the catalytic mechanism. The substrate site is built by E140 and K165.

This sequence belongs to the dTDP-4-dehydrorhamnose 3,5-epimerase family.

It catalyses the reaction dTDP-4-dehydro-6-deoxy-alpha-D-glucose = dTDP-4-dehydro-beta-L-rhamnose. It functions in the pathway carbohydrate biosynthesis; dTDP-L-rhamnose biosynthesis. It participates in antibiotic biosynthesis; streptomycin biosynthesis. Involved in the biosynthesis of the dihydrostreptose moiety of streptomycin. Catalyzes the epimerization of the C3' and C5'positions of dTDP-6-deoxy-D-xylo-4-hexulose, forming dTDP-6-deoxy-L-lyxo-4-hexulose. This is dTDP-4-dehydrorhamnose 3,5-epimerase from Streptomyces griseus.